Consider the following 171-residue polypeptide: Disulfide bond formation protein B (171 aa).

Topologically, residues 1-13 (MTFISNLADTRLA) are cytoplasmic. Residues 14–30 (WGLLFLSALVLVAYALF) traverse the membrane as a helical segment. At 31–48 (SQHAMGLQPCIMCIYQRT) the chain is on the periplasmic side. A disulfide bond links Cys-40 and Cys-43. A helical membrane pass occupies residues 49–63 (AIFGIMFACVPVLAA). Residues 64-70 (NNMLTRL) lie on the Cytoplasmic side of the membrane. The helical transmembrane segment at 71 to 88 (FAFTVWGISAIWGGLIAW) threads the bilayer. Residues 89–144 (EHYDIQNAANPFFATCEIVPNFPSWLPLHEWLPNLFAATGDCGNIDWVFMDMSMPQ) lie on the Periplasmic side of the membrane. A disulfide bond links Cys-104 and Cys-130. A helical membrane pass occupies residues 145–163 (WMMVVFAIYSSIWFVVLAS). Residues 164–171 (RLIGNRAI) are Cytoplasmic-facing.

This sequence belongs to the DsbB family.

The protein localises to the cell inner membrane. In terms of biological role, required for disulfide bond formation in some periplasmic proteins. Acts by oxidizing the DsbA protein. The protein is Disulfide bond formation protein B of Pseudoalteromonas atlantica (strain T6c / ATCC BAA-1087).